The primary structure comprises 64 residues: Large ribosomal subunit protein bL35 (64 aa).

Over residues 1 to 44 (MSKIKSHSGAAKRFKRTANGFKHKQSHTSHILTKKSTKRKRHLR) the composition is skewed to basic residues. A disordered region spans residues 1 to 48 (MSKIKSHSGAAKRFKRTANGFKHKQSHTSHILTKKSTKRKRHLRSMNQ).

It belongs to the bacterial ribosomal protein bL35 family.

This Marinomonas sp. (strain MWYL1) protein is Large ribosomal subunit protein bL35.